Reading from the N-terminus, the 210-residue chain is Orotate phosphoribosyltransferase (210 aa).

Residues Arg-94, Lys-98, His-100, and 120 to 128 (EDLISTGGS) contribute to the 5-phospho-alpha-D-ribose 1-diphosphate site. Ser-124 contributes to the orotate binding site.

It belongs to the purine/pyrimidine phosphoribosyltransferase family. PyrE subfamily. In terms of assembly, homodimer. It depends on Mg(2+) as a cofactor.

The catalysed reaction is orotidine 5'-phosphate + diphosphate = orotate + 5-phospho-alpha-D-ribose 1-diphosphate. The protein operates within pyrimidine metabolism; UMP biosynthesis via de novo pathway; UMP from orotate: step 1/2. In terms of biological role, catalyzes the transfer of a ribosyl phosphate group from 5-phosphoribose 1-diphosphate to orotate, leading to the formation of orotidine monophosphate (OMP). This chain is Orotate phosphoribosyltransferase, found in Bacillus mycoides (strain KBAB4) (Bacillus weihenstephanensis).